The sequence spans 845 residues: Protein SEY1 (845 aa).

Residues 1 to 29 (MELNVDSAKQLLAEHEQELQSAHDAHSIL) adopt a coiled-coil conformation. The Cytoplasmic portion of the chain corresponds to 1–749 (MELNVDSAKQ…KRATVSSIAQ (749 aa)). Residues 112 to 334 (GFGYDLCAVL…DPNFVFKTEY (223 aa)) enclose the GB1/RHD3-type G domain. GTP is bound at residue 122 to 129 (GSQSTGKS). The chain crosses the membrane as a helical span at residues 750–770 (VPLWMYGVMLVLGWNELMAIL). The Lumenal portion of the chain corresponds to 771–773 (SSP). Residues 774-794 (VYFAFLLVLIASAYIVWRLNL) form a helical membrane-spanning segment. At 795-845 (SGPLISVLRAVANEVHRLADAQLRTHFSQPLREPRPPAESRPAEQIELEPN) the chain is on the cytoplasmic side. The disordered stretch occupies residues 823 to 845 (QPLREPRPPAESRPAEQIELEPN). Over residues 826–838 (REPRPPAESRPAE) the composition is skewed to basic and acidic residues.

The protein belongs to the TRAFAC class dynamin-like GTPase superfamily. GB1/RHD3 GTPase family. RHD3 subfamily.

The protein resides in the endoplasmic reticulum membrane. Functionally, cooperates with the reticulon proteins and tubule-shaping DP1 family proteins to generate and maintain the structure of the tubular endoplasmic reticulum network. Has GTPase activity, which is required for its function in ER organization. This chain is Protein SEY1, found in Mycosarcoma maydis (Corn smut fungus).